Consider the following 283-residue polypeptide: Bifunctional protein FolD (283 aa).

Residues glycine 165–serine 167 and serine 190 contribute to the NADP(+) site.

Belongs to the tetrahydrofolate dehydrogenase/cyclohydrolase family. In terms of assembly, homodimer.

The enzyme catalyses (6R)-5,10-methylene-5,6,7,8-tetrahydrofolate + NADP(+) = (6R)-5,10-methenyltetrahydrofolate + NADPH. The catalysed reaction is (6R)-5,10-methenyltetrahydrofolate + H2O = (6R)-10-formyltetrahydrofolate + H(+). Its pathway is one-carbon metabolism; tetrahydrofolate interconversion. Functionally, catalyzes the oxidation of 5,10-methylenetetrahydrofolate to 5,10-methenyltetrahydrofolate and then the hydrolysis of 5,10-methenyltetrahydrofolate to 10-formyltetrahydrofolate. The chain is Bifunctional protein FolD from Methylibium petroleiphilum (strain ATCC BAA-1232 / LMG 22953 / PM1).